Here is a 343-residue protein sequence, read N- to C-terminus: Phenylalanine--tRNA ligase alpha subunit (343 aa).

E268 contributes to the Mg(2+) binding site.

Belongs to the class-II aminoacyl-tRNA synthetase family. Phe-tRNA synthetase alpha subunit type 1 subfamily. Tetramer of two alpha and two beta subunits. It depends on Mg(2+) as a cofactor.

It is found in the cytoplasm. The catalysed reaction is tRNA(Phe) + L-phenylalanine + ATP = L-phenylalanyl-tRNA(Phe) + AMP + diphosphate + H(+). This is Phenylalanine--tRNA ligase alpha subunit from Cupriavidus necator (strain ATCC 17699 / DSM 428 / KCTC 22496 / NCIMB 10442 / H16 / Stanier 337) (Ralstonia eutropha).